Here is a 366-residue protein sequence, read N- to C-terminus: Phenylalanine--tRNA ligase alpha subunit (366 aa).

Mg(2+) is bound at residue E259.

This sequence belongs to the class-II aminoacyl-tRNA synthetase family. Phe-tRNA synthetase alpha subunit type 1 subfamily. As to quaternary structure, tetramer of two alpha and two beta subunits. Mg(2+) is required as a cofactor.

It localises to the cytoplasm. The enzyme catalyses tRNA(Phe) + L-phenylalanine + ATP = L-phenylalanyl-tRNA(Phe) + AMP + diphosphate + H(+). This chain is Phenylalanine--tRNA ligase alpha subunit, found in Erythrobacter litoralis (strain HTCC2594).